Reading from the N-terminus, the 100-residue chain is Large ribosomal subunit protein uL23 (100 aa).

Belongs to the universal ribosomal protein uL23 family. In terms of assembly, part of the 50S ribosomal subunit. Contacts protein L29, and trigger factor when it is bound to the ribosome.

Functionally, one of the early assembly proteins it binds 23S rRNA. One of the proteins that surrounds the polypeptide exit tunnel on the outside of the ribosome. Forms the main docking site for trigger factor binding to the ribosome. This is Large ribosomal subunit protein uL23 from Thermotoga neapolitana (strain ATCC 49049 / DSM 4359 / NBRC 107923 / NS-E).